The chain runs to 62 residues: Guanine nucleotide-binding protein subunit gamma (62 aa).

The residue at position 59 (Cys59) is a Cysteine methyl ester. Cys59 carries S-geranylgeranyl cysteine lipidation. Residues 60-62 (SVL) constitute a propeptide, removed in mature form.

It belongs to the G protein gamma family. As to quaternary structure, g proteins are composed of 3 units, alpha, beta and gamma. Interacts with gpb-1 and gpb-2.

Its subcellular location is the cell membrane. Its function is as follows. Guanine nucleotide-binding proteins (G proteins) are involved as a modulator or transducer in various transmembrane signaling systems. The beta and gamma chains are required for the GTPase activity, for replacement of GDP by GTP, and for G protein-effector interaction. The sequence is that of Guanine nucleotide-binding protein subunit gamma (gpc-1) from Caenorhabditis briggsae.